A 314-amino-acid polypeptide reads, in one-letter code: D-alanine--D-alanine ligase (314 aa).

The region spanning Lys112 to Asp307 is the ATP-grasp domain. Ala138–Thr193 is a binding site for ATP. Asp261, Glu274, and Asn276 together coordinate Mg(2+).

It belongs to the D-alanine--D-alanine ligase family. Mg(2+) is required as a cofactor. Requires Mn(2+) as cofactor.

It is found in the cytoplasm. The catalysed reaction is 2 D-alanine + ATP = D-alanyl-D-alanine + ADP + phosphate + H(+). Its pathway is cell wall biogenesis; peptidoglycan biosynthesis. Functionally, cell wall formation. This is D-alanine--D-alanine ligase from Stutzerimonas stutzeri (strain A1501) (Pseudomonas stutzeri).